We begin with the raw amino-acid sequence, 507 residues long: MATLRVDEINKILRERIEQYNRKVGIENIGRVVQVGDGIARIIGLGEIMSGELVEFAEGTRGIALNLESKNVGIVLMGDGLMIQEGSFVKATGRIAQIPVSEAYLGRVINALAKPIDGRGEIVASESRLIESPAPGIISRRSVYEPLQTGLIAIDSMIPIGRGQRELIIGDRQTGKTAVATDTILNQKGQDVICVYVAIGQRASSVAQVVTTFHEEGAMEYTIVVAEMADSPATLQYLAPYTGAALAEYFMYRERHTLIIYDDLSKQAQAYRQMSLLLRRPPGREAYPGDVFYLHSRLLERAAKLNSLLGEGSMTALPIVETQSGDVSAYIPTNVISITDGQIFLSADLFNAGIRPAINVGISVSRVGSAAQIKAMKQVAGKSKLELAQFAELQAFAQFASALDKTSQNQLARGRRLRELLKQSQSNPLPVEEQVATIYTGTRGYLDSLEIEQVKKFLDELRKHLKDTKPQFQEIISSSKTFTEQAETLLKEAIQEQLERFSLQEQT.

An ATP-binding site is contributed by 170-177 (GDRQTGKT).

It belongs to the ATPase alpha/beta chains family. In terms of assembly, F-type ATPases have 2 components, CF(1) - the catalytic core - and CF(0) - the membrane proton channel. CF(1) has five subunits: alpha(3), beta(3), gamma(1), delta(1), epsilon(1). CF(0) has four main subunits: a, b, b' and c.

Its subcellular location is the plastid. It localises to the chloroplast thylakoid membrane. The catalysed reaction is ATP + H2O + 4 H(+)(in) = ADP + phosphate + 5 H(+)(out). Produces ATP from ADP in the presence of a proton gradient across the membrane. The alpha chain is a regulatory subunit. The sequence is that of ATP synthase subunit alpha, chloroplastic from Sorghum bicolor (Sorghum).